The sequence spans 434 residues: 3-phosphoshikimate 1-carboxyvinyltransferase (434 aa).

Residues Lys-15, Ser-16, and Arg-20 each coordinate 3-phosphoshikimate. Residue Lys-15 coordinates phosphoenolpyruvate. Phosphoenolpyruvate-binding residues include Gly-96 and Arg-124. 3-phosphoshikimate is bound by residues Ser-169, Gln-171, Ser-195, Asp-319, and Lys-346. Gln-171 contributes to the phosphoenolpyruvate binding site. The active-site Proton acceptor is Asp-319. Positions 350 and 394 each coordinate phosphoenolpyruvate.

It belongs to the EPSP synthase family. In terms of assembly, monomer.

It localises to the cytoplasm. The enzyme catalyses 3-phosphoshikimate + phosphoenolpyruvate = 5-O-(1-carboxyvinyl)-3-phosphoshikimate + phosphate. The protein operates within metabolic intermediate biosynthesis; chorismate biosynthesis; chorismate from D-erythrose 4-phosphate and phosphoenolpyruvate: step 6/7. In terms of biological role, catalyzes the transfer of the enolpyruvyl moiety of phosphoenolpyruvate (PEP) to the 5-hydroxyl of shikimate-3-phosphate (S3P) to produce enolpyruvyl shikimate-3-phosphate and inorganic phosphate. The chain is 3-phosphoshikimate 1-carboxyvinyltransferase from Prosthecochloris aestuarii (strain DSM 271 / SK 413).